Here is a 284-residue protein sequence, read N- to C-terminus: Bifunctional protein FolD (284 aa).

NADP(+) is bound by residues 166–168 and isoleucine 232; that span reads GAS.

This sequence belongs to the tetrahydrofolate dehydrogenase/cyclohydrolase family. In terms of assembly, homodimer.

It catalyses the reaction (6R)-5,10-methylene-5,6,7,8-tetrahydrofolate + NADP(+) = (6R)-5,10-methenyltetrahydrofolate + NADPH. It carries out the reaction (6R)-5,10-methenyltetrahydrofolate + H2O = (6R)-10-formyltetrahydrofolate + H(+). The protein operates within one-carbon metabolism; tetrahydrofolate interconversion. Functionally, catalyzes the oxidation of 5,10-methylenetetrahydrofolate to 5,10-methenyltetrahydrofolate and then the hydrolysis of 5,10-methenyltetrahydrofolate to 10-formyltetrahydrofolate. The polypeptide is Bifunctional protein FolD (Shewanella amazonensis (strain ATCC BAA-1098 / SB2B)).